Reading from the N-terminus, the 250-residue chain is Protein orai-2 (250 aa).

Helical transmembrane passes span 66-83, 94-114, 148-168, and 192-212; these read TSAL…EVQL, LIAF…ALLI, LAWG…VVLL, and AALV…VFTI.

Belongs to the Orai family. As to quaternary structure, oligomerizes in homomeric and heteromeric ORAI complexes. Native CRAC channels most likely consist of hexameric ORAI heteromers, implying that diverse ORAI1, ORAI2 and ORAI3 subunit combinations with distinct biophysical properties can operate in a cell-type specific way. Interacts with STIM1; this regulates channel activity. Interacts with CRACR2A/EFCAB4B.

The protein localises to the cell membrane. It catalyses the reaction Ca(2+)(in) = Ca(2+)(out). With respect to regulation, CRAC channels are regulated by fast Ca(2+)-dependent inactivation (FCDI), a mechanism that limits Ca(2+) influx and cell toxicity. ORAI2 channels display prominent FCDI. Inhibited by lanthanides such as Gd(3+) ions. Functionally, pore-forming subunit of inward rectifying Ca(2+) release-activated Ca(2+) (CRAC) channels. Assembles with ORAI1 and ORAI3 to form hexameric CRAC channels that mediate Ca(2+) influx upon depletion of endoplasmic reticulum Ca(2+) store and channel activation by Ca(2+) sensor STIM1, a process known as store-operated Ca(2+) entry (SOCE). Various pore subunit combinations may account for distinct CRAC channel spatiotemporal and cell-type specific dynamics. ORAI1 mainly contributes to the generation of Ca(2+) plateaus involved in sustained Ca(2+) entry and is dispensable for cytosolic Ca(2+) oscillations, whereas ORAI2 and ORAI3 generate oscillatory patterns. CRAC channels assemble in Ca(2+) signaling microdomains where Ca(2+) influx is coupled to calmodulin and calcineurin signaling and activation of NFAT transcription factors recruited to ORAI1 via AKAP5. CRAC channels are the main pathway for Ca(2+) influx in T cells and promote the immune response to pathogens by activating NFAT-dependent cytokine and chemokine transcription. The sequence is that of Protein orai-2 (Orai2) from Mus musculus (Mouse).